The chain runs to 494 residues: Histidine--tRNA ligase (494 aa).

It belongs to the class-II aminoacyl-tRNA synthetase family. Homodimer.

The protein localises to the cytoplasm. It carries out the reaction tRNA(His) + L-histidine + ATP = L-histidyl-tRNA(His) + AMP + diphosphate + H(+). This is Histidine--tRNA ligase from Cereibacter sphaeroides (strain ATCC 17023 / DSM 158 / JCM 6121 / CCUG 31486 / LMG 2827 / NBRC 12203 / NCIMB 8253 / ATH 2.4.1.) (Rhodobacter sphaeroides).